Consider the following 398-residue polypeptide: Dual-specificity RNA methyltransferase RlmN (398 aa).

Glu-100 acts as the Proton acceptor in catalysis. Positions 106–345 constitute a Radical SAM core domain; sequence DGDRGTLCVS…TTVRTTRGDD (240 aa). The cysteines at positions 113 and 350 are disulfide-linked. [4Fe-4S] cluster is bound by residues Cys-120, Cys-124, and Cys-127. S-adenosyl-L-methionine is bound by residues 174–175, Ser-206, 228–230, and Asn-307; these read GE and SLH. The S-methylcysteine intermediate role is filled by Cys-350.

It belongs to the radical SAM superfamily. RlmN family. Requires [4Fe-4S] cluster as cofactor.

It localises to the cytoplasm. The enzyme catalyses adenosine(2503) in 23S rRNA + 2 reduced [2Fe-2S]-[ferredoxin] + 2 S-adenosyl-L-methionine = 2-methyladenosine(2503) in 23S rRNA + 5'-deoxyadenosine + L-methionine + 2 oxidized [2Fe-2S]-[ferredoxin] + S-adenosyl-L-homocysteine. It catalyses the reaction adenosine(37) in tRNA + 2 reduced [2Fe-2S]-[ferredoxin] + 2 S-adenosyl-L-methionine = 2-methyladenosine(37) in tRNA + 5'-deoxyadenosine + L-methionine + 2 oxidized [2Fe-2S]-[ferredoxin] + S-adenosyl-L-homocysteine. Functionally, specifically methylates position 2 of adenine 2503 in 23S rRNA and position 2 of adenine 37 in tRNAs. m2A2503 modification seems to play a crucial role in the proofreading step occurring at the peptidyl transferase center and thus would serve to optimize ribosomal fidelity. This Saccharophagus degradans (strain 2-40 / ATCC 43961 / DSM 17024) protein is Dual-specificity RNA methyltransferase RlmN.